The following is a 364-amino-acid chain: MASEKRILIMAGGTGGHVFPALAVAKALAKQGWQVRWLGTADRMEARLVPQHGFDIDFIDIKGVRGNGLIRKLAAPFKILRSIMQAREVIKEFKPHVVLGMGGFASGPGGVAAKLSGIPLVLHEQNAIPGMTNKLLSRIASRVLCAFENTFEGNAEVVGNPIRSELIALGRSEQPIVPDDALRVLVVGGSLGAKIFNDLMPSVTAAVAQHHSMTVWHQVGKGNQAQVEAEYLQLGQSGSVKVAEFIDDMEAAYRWADVILCRAGALTVSEVAAVGLPSLLVPYPHAVDDHQTKNAQVLVEAGGAFLLPQTVLDSEKLISKLQILASDRKALIEMGQLAKSVAVLDATERVAAVCIALASKEKDD.

UDP-N-acetyl-alpha-D-glucosamine-binding positions include 14–16, Asn-126, Arg-163, Ser-190, Ile-246, 265–270, and Gln-291; these read TGG and ALTVSE.

Belongs to the glycosyltransferase 28 family. MurG subfamily.

It localises to the cell inner membrane. It catalyses the reaction di-trans,octa-cis-undecaprenyl diphospho-N-acetyl-alpha-D-muramoyl-L-alanyl-D-glutamyl-meso-2,6-diaminopimeloyl-D-alanyl-D-alanine + UDP-N-acetyl-alpha-D-glucosamine = di-trans,octa-cis-undecaprenyl diphospho-[N-acetyl-alpha-D-glucosaminyl-(1-&gt;4)]-N-acetyl-alpha-D-muramoyl-L-alanyl-D-glutamyl-meso-2,6-diaminopimeloyl-D-alanyl-D-alanine + UDP + H(+). The protein operates within cell wall biogenesis; peptidoglycan biosynthesis. Its function is as follows. Cell wall formation. Catalyzes the transfer of a GlcNAc subunit on undecaprenyl-pyrophosphoryl-MurNAc-pentapeptide (lipid intermediate I) to form undecaprenyl-pyrophosphoryl-MurNAc-(pentapeptide)GlcNAc (lipid intermediate II). The sequence is that of UDP-N-acetylglucosamine--N-acetylmuramyl-(pentapeptide) pyrophosphoryl-undecaprenol N-acetylglucosamine transferase from Shewanella loihica (strain ATCC BAA-1088 / PV-4).